The following is a 259-amino-acid chain: Global transcriptional regulator CodY (259 aa).

The interval 1 to 155 (MTLLEKTRKI…GGTVVGMEIL (155 aa)) is GAF domain. Residues 203 to 222 (ASKIADRVGITRSVIVNALR) constitute a DNA-binding region (H-T-H motif).

This sequence belongs to the CodY family.

The protein resides in the cytoplasm. Functionally, DNA-binding global transcriptional regulator which is involved in the adaptive response to starvation and acts by directly or indirectly controlling the expression of numerous genes in response to nutrient availability. During rapid exponential growth, CodY is highly active and represses genes whose products allow adaptation to nutrient depletion. This chain is Global transcriptional regulator CodY, found in Listeria monocytogenes serotype 4b (strain CLIP80459).